We begin with the raw amino-acid sequence, 851 residues long: Glycogen phosphorylase, liver form (851 aa).

Position 2 is an N-acetylalanine (Ala2). A Phosphoserine; by PHK; in form phosphorylase a modification is found at Ser15. Residues 43 to 45, Tyr76, and Arg310 contribute to the AMP site; that span reads DRN. Lys364 carries the post-translational modification N6-succinyllysine. Lys470 carries the post-translational modification N6-acetyllysine. Phosphoserine occurs at positions 524, 561, and 639. Lys681 carries the post-translational modification N6-(pyridoxal phosphate)lysine. The residue at position 796 (Lys796) is an N6-acetyllysine.

It belongs to the glycogen phosphorylase family. As to quaternary structure, homodimer; enzymatically active. Interacts with PPP1R3B; recruits the phosphatase PP1 which dephosphorylates and inactivates PYGL/glycogen phosphorylase. Requires pyridoxal 5'-phosphate as cofactor. Post-translationally, acetylation, which is up-regulated by glucose and insulin and down-regulated by glucagon, inhibits the glycogen phosphorylase activity by promoting PPP1R3B-mediated recruitment of phosphatase PP1 and Ser-15 dephosphorylation. Phosphorylation at Ser-15 converts inactive phosphorylase b into active phosphorylase a. Dephosphorylation of Ser-15 by phosphatase PP1 inactivates the enzyme.

It is found in the cytoplasm. The protein localises to the cytosol. The enzyme catalyses [(1-&gt;4)-alpha-D-glucosyl](n) + phosphate = [(1-&gt;4)-alpha-D-glucosyl](n-1) + alpha-D-glucose 1-phosphate. Its activity is regulated as follows. Allosterically regulated through the non-covalent binding of metabolites, being activated by AMP and inhibited by ATP, ADP, and glucose-6-phosphate. The activity is also controlled by post-translational modifications including phosphorylation and acetylation. Its function is as follows. Allosteric enzyme that catalyzes the rate-limiting step in glycogen catabolism, the phosphorolytic cleavage of glycogen to produce glucose-1-phosphate, and plays a central role in maintaining cellular and organismal glucose homeostasis. The polypeptide is Glycogen phosphorylase, liver form (Bos taurus (Bovine)).